Reading from the N-terminus, the 184-residue chain is Cbp/p300-interacting transactivator 4 (184 aa).

Low complexity predominate over residues 18–28 (PSAAAAHGPHA). 2 disordered regions span residues 18–67 (PSAA…YGAF) and 94–128 (TPYPGRAAAPPNAPGGPPGPQPAPSAAAPPPPAHA). The segment covering 104–126 (PNAPGGPPGPQPAPSAAAPPPPA) has biased composition (pro residues).

Belongs to the CITED family. As to quaternary structure, interacts via its C-terminal region with the CH1 domain of CREBBP and EP300. Interacts with all TFAP2/AP-2 isoforms. Expressed in most tissues examined with highest levels of expression in heart, liver, skeletal muscle and pancreas. Also expressed in bladder cell line ECV-304 and in various breast cancer cell lines. Also detected in both in situ and invasive breast tumors where its expression is down-regulated and mostly restricted to the cytoplasm of malignant epithelium. Down-regulation of expression is associated with elevated levels of HIF1A and increased tumor growth and angiogenesis.

Its subcellular location is the nucleus. The protein resides in the cytoplasm. Functionally, acts as a transcriptional coactivator for TFAP2/AP-2. Enhances estrogen-dependent transactivation mediated by estrogen receptors. May function as an inhibitor of transactivation by HIF1A by disrupting HIF1A interaction with CREBBP. May be involved in regulation of gene expression during development and differentiation of blood cells, endothelial cells and mammary epithelial cells. In Homo sapiens (Human), this protein is Cbp/p300-interacting transactivator 4.